The primary structure comprises 197 residues: Large ribosomal subunit protein bL25 (197 aa).

The protein belongs to the bacterial ribosomal protein bL25 family. CTC subfamily. Part of the 50S ribosomal subunit; part of the 5S rRNA/L5/L18/L25 subcomplex. Contacts the 5S rRNA. Binds to the 5S rRNA independently of L5 and L18.

Its function is as follows. This is one of the proteins that binds to the 5S RNA in the ribosome where it forms part of the central protuberance. This is Large ribosomal subunit protein bL25 from Caulobacter vibrioides (strain ATCC 19089 / CIP 103742 / CB 15) (Caulobacter crescentus).